The sequence spans 253 residues: UPF0246 protein Swit_4565 (253 aa).

The protein belongs to the UPF0246 family.

This Rhizorhabdus wittichii (strain DSM 6014 / CCUG 31198 / JCM 15750 / NBRC 105917 / EY 4224 / RW1) (Sphingomonas wittichii) protein is UPF0246 protein Swit_4565.